The chain runs to 104 residues: ATLAPTVLIFPPSPAELATGTATIVCVANKYFPDGTVTWQVDGKPLTTGIETSKTPQNSDDCTYNLSSTLTLKSDEYNSHDEYTCQVAQGSGSPVVQSFSRKNC.

One can recognise an Ig-like domain in the interval 5-100 (PTVLIFPPSP…SGSPVVQSFS (96 aa)). Cys26 and Cys85 are disulfide-bonded.

The sequence is that of Ig kappa chain b5 variant C region from Oryctolagus cuniculus (Rabbit).